We begin with the raw amino-acid sequence, 98 residues long: DNA-binding protein Fis (98 aa).

Positions 74–93 (QTRAATMMGINRGTLRKKLK) form a DNA-binding region, H-T-H motif.

The protein belongs to the transcriptional regulatory Fis family. As to quaternary structure, homodimer.

Activates ribosomal RNA transcription. Plays a direct role in upstream activation of rRNA promoters. In Vibrio atlanticus (strain LGP32) (Vibrio splendidus (strain Mel32)), this protein is DNA-binding protein Fis.